The sequence spans 357 residues: Protein RecA (357 aa).

73–80 is a binding site for ATP; sequence GPESSGKT.

It belongs to the RecA family.

It localises to the cytoplasm. Can catalyze the hydrolysis of ATP in the presence of single-stranded DNA, the ATP-dependent uptake of single-stranded DNA by duplex DNA, and the ATP-dependent hybridization of homologous single-stranded DNAs. It interacts with LexA causing its activation and leading to its autocatalytic cleavage. This chain is Protein RecA, found in Methylibium petroleiphilum (strain ATCC BAA-1232 / LMG 22953 / PM1).